The following is a 208-amino-acid chain: V-type ATP synthase subunit E (208 aa).

Belongs to the V-ATPase E subunit family.

Its function is as follows. Produces ATP from ADP in the presence of a proton gradient across the membrane. The polypeptide is V-type ATP synthase subunit E (Chlamydia trachomatis serovar A (strain ATCC VR-571B / DSM 19440 / HAR-13)).